Reading from the N-terminus, the 531-residue chain is MSKKTIAVIGSGAAALSLAAAFPPSYEVTVITKKSVKNSNSVYAQGGIAAAYAKDDSIEAHLEDTLYAGCGHNNLAIVADVLHDGKMMVQSLLERGFPFDRNERGGVCLGREGAHSYNRIFHAGGDATGRLLIDYLLKRINSKIKLIENETAADLLIEDGRCIGVMTKDSKGRLKVRHADEVVLAAGGCGNLFLHHTNDLTVTGDGLSLAYRAGAELTDLEFTQFHPTLLVKNGVSYGLVSEAVRGEGGCLVDENGRRIMAERHPLGDLAPRDIVSRVIHEEMAKGNRVYIDFSAISDFETRFPTITAICEKAGIDIHSGKIPVAPGMHFLMGGVSVNRWGETTVPGLYAIGETACSGLHGANRLASNSLLEALVFGKRAAEHIIQKPVYNRQYQSGLETSVFYEVPDIEGHELQSKMTSHMSILREQSSLIELSIWLHTLPFQEVNVKDITIRQMELSHLWQTAKLMTFSALLREESRGAHFRTDFPHAEVSWQGRQIVHTKKGTKIRKNEGIWNNESFTAEKITESLFS.

Residues Ser-11 to Ala-14, Lys-33, Asn-40 to Gly-47, Thr-151 to Ala-152, and Asp-205 contribute to the FAD site. The active-site Proton donor/acceptor is the Arg-272. Residues Glu-353 and Ser-369–Leu-370 contribute to the FAD site.

Belongs to the FAD-dependent oxidoreductase 2 family. NadB subfamily. Monomer. Homodimer. FAD serves as cofactor.

The protein resides in the cytoplasm. The enzyme catalyses L-aspartate + O2 = iminosuccinate + H2O2. The catalysed reaction is fumarate + L-aspartate = iminosuccinate + succinate. The protein operates within cofactor biosynthesis; NAD(+) biosynthesis; iminoaspartate from L-aspartate (oxidase route): step 1/1. Functionally, catalyzes the oxidation of L-aspartate to iminoaspartate, the first step in the de novo biosynthesis of NAD(+). Can use either oxygen or fumarate as electron acceptors, which allows the enzyme to be functional under aerobic and anaerobic conditions. The chain is L-aspartate oxidase from Bacillus subtilis (strain 168).